The chain runs to 305 residues: Dioxygenase hkm4 (305 aa).

Fe cation-binding residues include histidine 140, aspartate 142, and histidine 216.

This sequence belongs to the PhyH family. Fe cation is required as a cofactor.

The protein operates within secondary metabolite biosynthesis. Its function is as follows. Dioxygenase; part of the gene cluster that mediates the biosynthesis of hancockiamides, an unusual new family of N-cinnamoylated piperazines. The NRPS hkm10 and the NmrA-like reductase hkm9 are proposed to convert two molecules of L-Phe to the intermediary piperazine called xenocockiamide A. Xenocockiamide A is then converted to hancockiamide D via a series of hydroxylations and O-methylations. The tyrosinase hkm6 may catalyze an aromatic hydroxylation, then the 2-oxoglutarate-dependent Fe(II) dioxygenase hkm4 and the FAD-dependent phenol hydroxylase hkm7 may catalyze consecutive hydroxylations to install 2 more hydroxy groups, and the methyltransferase hkm8 probably catalyzes two methylations using 2 molecules of S-adenosyl-L-methionine (SAM). The NRPS hkm11 activates and transfers trans-cinnamate supplied by the PAL hkm12 to hancockiamide D and produces hancockiamide A. NRPS Hkm11 has the flexibility to tolerate the bulky hancockiamide G as a substrate and the absence of the acetyl-transferase hkm3 opens up the opportunity for hkm11 to introduce a second N-cinnamoyl moiety. The cytochrome P450 monooxygenase hkm5 catalyzes the methylenedioxy bridge formation, converting hancockiamide A into hancockiamide G. Hkm5 can also convert hancockiamide B into hancockiamide C, and hancockiamide D into hancockiamide H. The N-acetyltransferase hkm3 finally transfers an acetyl group to 1-N of piperazine, converting hancockiamide A into hancockiamide B and hancockiamide G into hancockiamide C. This is Dioxygenase hkm4 from Aspergillus hancockii.